A 997-amino-acid chain; its full sequence is Kinesin-like protein KIF19 (997 aa).

Residues 11–346 (QLTVALRIRP…LTYADRAKNI (336 aa)) enclose the Kinesin motor domain. 104 to 111 (GPTGCGKT) is an ATP binding site. The stretch at 360 to 437 (HIAQYTSIIS…REQMDIRRQL (78 aa)) forms a coiled coil. Residues 468–491 (RARKWRDEHRKETYGKDDSEKDSD) are compositionally biased toward basic and acidic residues. Residues 468-503 (RARKWRDEHRKETYGKDDSEKDSDTGDDQSDFIEPP) are disordered. The stretch at 508-577 (ARETIQILEG…ELEIENTEMQ (70 aa)) forms a coiled coil. 3 disordered regions span residues 662-690 (NLTA…RNPI), 792-811 (GDRL…SMSE), and 848-890 (GGGS…SRSF). Basic and acidic residues-rich tracts occupy residues 792–802 (GDRLQPMKERS) and 869–880 (QKLEKREESLEV). A coiled-coil region spans residues 861-889 (HRTQKKQAQKLEKREESLEVKRRKKRSRS).

The protein belongs to the TRAFAC class myosin-kinesin ATPase superfamily. Kinesin family.

Its subcellular location is the cytoplasm. The protein localises to the cytoskeleton. It localises to the cell projection. The protein resides in the cilium. Plus end-directed microtubule-dependent motor protein that regulates the length of motile cilia by mediating depolymerization of microtubules at ciliary tips. The sequence is that of Kinesin-like protein KIF19 (kif19) from Xenopus laevis (African clawed frog).